Reading from the N-terminus, the 120-residue chain is Large ribosomal subunit protein uL18 (120 aa).

This sequence belongs to the universal ribosomal protein uL18 family. Part of the 50S ribosomal subunit; part of the 5S rRNA/L5/L18/L25 subcomplex. Contacts the 5S and 23S rRNAs.

Functionally, this is one of the proteins that bind and probably mediate the attachment of the 5S RNA into the large ribosomal subunit, where it forms part of the central protuberance. This chain is Large ribosomal subunit protein uL18, found in Azorhizobium caulinodans (strain ATCC 43989 / DSM 5975 / JCM 20966 / LMG 6465 / NBRC 14845 / NCIMB 13405 / ORS 571).